A 441-amino-acid chain; its full sequence is ATP-dependent protease ATPase subunit HslU (441 aa).

Residues isoleucine 18, 60–65, aspartate 254, glutamate 319, and arginine 391 each bind ATP; that span reads GVGKTE.

The protein belongs to the ClpX chaperone family. HslU subfamily. In terms of assembly, a double ring-shaped homohexamer of HslV is capped on each side by a ring-shaped HslU homohexamer. The assembly of the HslU/HslV complex is dependent on binding of ATP.

Its subcellular location is the cytoplasm. In terms of biological role, ATPase subunit of a proteasome-like degradation complex; this subunit has chaperone activity. The binding of ATP and its subsequent hydrolysis by HslU are essential for unfolding of protein substrates subsequently hydrolyzed by HslV. HslU recognizes the N-terminal part of its protein substrates and unfolds these before they are guided to HslV for hydrolysis. This Shewanella woodyi (strain ATCC 51908 / MS32) protein is ATP-dependent protease ATPase subunit HslU.